A 344-amino-acid chain; its full sequence is MTLTTEDFNYDLPHELIAQTPIKERDESRLLVLDHETGAMEDKHFYDIIDQLNPGDAVVMNNSRVMPARIYGIKDKTGGHFEVLLLHNIEGDRWETLVKPAKRAKTGTKIIFGDGALTATVTKELEHGGREIVFDYDGIFMEVLEKLGEMPLPPYIKEKLDDPERYQTVYSKEPGSAAAPTAGLHWTKELLEKVEQKGIKLVYLTLHVGLGTFRPVDEDNIEDHKMHSEFYQLSEESAAALNEVKKQGGRIVATGTTSIRTLETIGSKFNGEIKADSGWTDIFIKPGYEWKVVDAFITNFHLPKSTLVMLVAAFTGRENILNAYQHAIEEKYRFFSFGDAMFIK.

The protein belongs to the QueA family. Monomer.

It localises to the cytoplasm. It catalyses the reaction 7-aminomethyl-7-carbaguanosine(34) in tRNA + S-adenosyl-L-methionine = epoxyqueuosine(34) in tRNA + adenine + L-methionine + 2 H(+). It participates in tRNA modification; tRNA-queuosine biosynthesis. Transfers and isomerizes the ribose moiety from AdoMet to the 7-aminomethyl group of 7-deazaguanine (preQ1-tRNA) to give epoxyqueuosine (oQ-tRNA). The sequence is that of S-adenosylmethionine:tRNA ribosyltransferase-isomerase from Pediococcus pentosaceus (strain ATCC 25745 / CCUG 21536 / LMG 10740 / 183-1w).